Consider the following 58-residue polypeptide: Small ribosomal subunit protein bS21 (58 aa).

Basic and acidic residues predominate over residues 32-42 (ARRREHYEKPS). The interval 32-58 (ARRREHYEKPSVRRKKKSEAARKRRWH) is disordered. Positions 43–58 (VRRKKKSEAARKRRWH) are enriched in basic residues.

The protein belongs to the bacterial ribosomal protein bS21 family.

The polypeptide is Small ribosomal subunit protein bS21 (Moorella thermoacetica (strain ATCC 39073 / JCM 9320)).